A 145-amino-acid polypeptide reads, in one-letter code: MPVFTKEALERLPIQLGNFFKKFPPENPNAWTTNPNRQNPFLATRNPQNGLVINPYYSNRRQAEIYKEARLQNLDNLLPQQMSWQKDSTRHILKGLLNPKGKISERKRDEILENRRLKLSESLKKTSKFKNERQKASKIAKPSPF.

Basic and acidic residues predominate over residues 123 to 135 (LKKTSKFKNERQK). The disordered stretch occupies residues 123–145 (LKKTSKFKNERQKASKIAKPSPF).

It belongs to the mitochondrion-specific ribosomal protein mL59 family. Component of the mitochondrial large ribosomal subunit (mt-LSU). Mature yeast 74S mitochondrial ribosomes consist of a small (37S) and a large (54S) subunit. The 37S small subunit contains a 15S ribosomal RNA (15S mt-rRNA) and at least 32 different proteins. The 54S large subunit contains a 21S rRNA (21S mt-rRNA) and at least 45 different proteins.

The protein resides in the mitochondrion. Component of the mitochondrial ribosome (mitoribosome), a dedicated translation machinery responsible for the synthesis of mitochondrial genome-encoded proteins, including at least some of the essential transmembrane subunits of the mitochondrial respiratory chain. The mitoribosomes are attached to the mitochondrial inner membrane and translation products are cotranslationally integrated into the membrane. The polypeptide is Large ribosomal subunit protein mL59 (mrpl25) (Schizosaccharomyces pombe (strain 972 / ATCC 24843) (Fission yeast)).